The following is a 545-amino-acid chain: CTP synthase (545 aa).

An amidoligase domain region spans residues Met1–Leu266. Ser14 provides a ligand contact to CTP. Residue Ser14 coordinates UTP. Residues Ser15–Ile20 and Asp72 each bind ATP. Positions 72 and 140 each coordinate Mg(2+). Residues Asp147 to Glu149, Lys187 to Gln192, and Lys223 each bind CTP. Residues Lys187–Gln192 and Lys223 each bind UTP. Position 239–241 (Lys239–Val241) interacts with ATP. In terms of domain architecture, Glutamine amidotransferase type-1 spans Thr291 to Arg542. L-glutamine is bound at residue Gly352. The Nucleophile; for glutamine hydrolysis role is filled by Cys379. Residues Leu380 to Gln383, Glu403, and Arg470 each bind L-glutamine. Active-site residues include His515 and Glu517.

Belongs to the CTP synthase family. In terms of assembly, homotetramer.

The enzyme catalyses UTP + L-glutamine + ATP + H2O = CTP + L-glutamate + ADP + phosphate + 2 H(+). It catalyses the reaction L-glutamine + H2O = L-glutamate + NH4(+). It carries out the reaction UTP + NH4(+) + ATP = CTP + ADP + phosphate + 2 H(+). Its pathway is pyrimidine metabolism; CTP biosynthesis via de novo pathway; CTP from UDP: step 2/2. Allosterically activated by GTP, when glutamine is the substrate; GTP has no effect on the reaction when ammonia is the substrate. The allosteric effector GTP functions by stabilizing the protein conformation that binds the tetrahedral intermediate(s) formed during glutamine hydrolysis. Inhibited by the product CTP, via allosteric rather than competitive inhibition. Its function is as follows. Catalyzes the ATP-dependent amination of UTP to CTP with either L-glutamine or ammonia as the source of nitrogen. Regulates intracellular CTP levels through interactions with the four ribonucleotide triphosphates. This is CTP synthase from Yersinia enterocolitica serotype O:8 / biotype 1B (strain NCTC 13174 / 8081).